The sequence spans 523 residues: Probable endopeptidase p60 (523 aa).

An N-terminal signal peptide occupies residues 1-27 (MNMKKATIAATAGIAVTAFAAPTIASA). Residues 28 to 71 (STVVVEAGDTLWGIAQDNGTTVDALKKANKLTTDKIVPGQKLQV) form the LysM 1 domain. The region spanning 78-142 (KTEKSVSATW…VNGKYLGNAV (65 aa)) is the SH3b domain. A disordered region spans residues 146-188 (PSATPEVKQEETTQAAPAQQTKTEVKQATPAATTEKDAVETKT). The span at 157 to 167 (TTQAAPAQQTK) shows a compositional bias: low complexity. The LysM 2 domain occupies 198-241 (TTHTVKSGDTIWALSVKYGASVQDLMSWNNLSSSSIYVGQNIAV). 2 stretches are compositionally biased toward low complexity: residues 251-282 (PKAEAKTEAPAAEKQTAAPVVKESTNTSTTTT) and 290-318 (EKQTSTTKAPAQAAKPAPAPAPTVNTNAS). Disordered stretches follow at residues 251–323 (PKAE…YTVK) and 367–408 (ATNT…SSSA). Residues 318 to 361 (SSYTVKSGDTLGKIASTFGTTVSKIKALNGLTSDNLQVGDVLKV) enclose the LysM 3 domain. The NlpC/P60 domain maps to 405-523 (SSSASAIIAE…GQYLVGFGRV (119 aa)). Cys-435 functions as the Nucleophile in the catalytic mechanism. His-485 serves as the catalytic Proton acceptor. Asn-497 is a catalytic residue.

It belongs to the peptidase C40 family.

Its function is as follows. This major extracellular protein may be involved in the invasion of non-professional phagocytic cells by Listeria. The chain is Probable endopeptidase p60 (iap) from Listeria seeligeri.